A 1544-amino-acid chain; its full sequence is Zinc finger protein GLI2 (1544 aa).

Positions 1 to 26 are disordered; the sequence is METSAPAPALEKKEAKSGLLEDSSFP. A phosphoserine mark is found at serine 145, serine 230, serine 232, and serine 238. A disordered region spans residues 338 to 364; the sequence is SSSSSNCLNDANQNKQNSESAVSSTVN. Residue serine 385 is modified to Phosphoserine; by DYRK2. The C2H2-type 1 zinc-finger motif lies at 417 to 444; sequence TNCHWADCTKEYDTQEQLVHHINNEHIH. The segment at 455–477 adopts a C2H2-type 2; degenerate zinc-finger fold; the sequence is QACTREQKPFKAQYMLVVHMRRH. 3 C2H2-type zinc fingers span residues 483-507, 513-538, and 544-569; these read HKCT…LRSH, YVCE…NRTH, and YICK…KTVH. Disordered regions lie at residues 557–619 and 635–682; these read DPSS…TSHT and GLCQ…ALAD. A compositionally biased stretch (basic and acidic residues) spans 569–585; that stretch reads HGPDAHVTKKQRNDVHV. A compositionally biased stretch (low complexity) spans 637-657; it reads CQSSPGAQSSCSSEPSPLGSA. Serine 707 carries the post-translational modification Phosphoserine. Threonine 708 carries the phosphothreonine modification. An N6-acetyllysine; by EP300 modification is found at lysine 740. Disordered stretches follow at residues 781–800, 805–861, 908–963, 995–1016, 1166–1220, and 1422–1457; these read SQLQ…AYTV, SGIS…PGLL, ALPG…RRPD, VQSH…RPPS, FGQY…CLGM, and GGCP…VSST. Composition is skewed to polar residues over residues 790–800 and 805–814; these read STSTMSSAYTV and SGISPYFSSR. A compositionally biased stretch (basic and acidic residues) spans 954-963; sequence RASDPVRRPD. Serine 997 bears the Phosphoserine; by DYRK2 mark. Polar residues-rich tracts occupy residues 997-1009, 1173-1190, and 1200-1209; these read SHPS…TRNA, NPQS…TQPH, and SRGSYTQQPR.

This sequence belongs to the GLI C2H2-type zinc-finger protein family. Interacts with ZIC1 and ZIC2. Interacts with STK36. Interacts with SUFU; this inhibits transcriptional activation mediated by GLI2. Interacts (via C-terminal internal region) with FOXC1 (via N-terminus); this interaction is direct and increases GLI2 DNA-binding and transcriptional activity through a smoothened (SMO)-independent Hedgehog (Hh) signaling pathway. Post-translationally, phosphorylated in vitro by ULK3. Phosphorylated by DYRK2; this inhibits GLI2 transcription factor activity and promotes proteasomal degradation of GLI2. In terms of processing, acetylation at Lys-740 inhibits Hh target gene expression, probably by impeding entry into chromatin thus preventing promoter occupancy.

It localises to the nucleus. The protein resides in the cytoplasm. The protein localises to the cell projection. Its subcellular location is the cilium. Functionally, functions as a transcription regulator in the hedgehog (Hh) pathway. Functions as a transcriptional activator. May also function as transcriptional repressor. Requires STK36 for full transcriptional activator activity. Binds to the DNA sequence 5'-GAACCACCCA-3' which is part of the TRE-2S regulatory element. Is involved in the smoothened (SHH) signaling pathway. Required for normal skeleton development. This is Zinc finger protein GLI2 from Mus musculus (Mouse).